We begin with the raw amino-acid sequence, 308 residues long: Olfactory receptor 8D1 (308 aa).

Topologically, residues Met-1–Leu-25 are extracellular. Asn-5 carries N-linked (GlcNAc...) asparagine glycosylation. A helical transmembrane segment spans residues Pro-26–Ile-46. The Cytoplasmic segment spans residues Leu-47 to Leu-54. The chain crosses the membrane as a helical span at residues Leu-55–Ser-75. Residues Val-76 to Val-99 lie on the Extracellular side of the membrane. Cys-97 and Cys-189 are joined by a disulfide. A helical membrane pass occupies residues Gln-100–Tyr-120. The Cytoplasmic portion of the chain corresponds to Asp-121–Trp-139. Residues Val-140 to Thr-160 form a helical membrane-spanning segment. At Ser-161–Leu-197 the chain is on the extracellular side. Residue Asn-186 is glycosylated (N-linked (GlcNAc...) asparagine). Residues Leu-198–Ser-217 traverse the membrane as a helical segment. Residues Tyr-218–Ala-237 are Cytoplasmic-facing. Residues Phe-238–Met-258 traverse the membrane as a helical segment. Over Tyr-259–Glu-271 the chain is Extracellular. The chain crosses the membrane as a helical span at residues Lys-272–Leu-292. Residues Arg-293–Lys-308 are Cytoplasmic-facing.

Belongs to the G-protein coupled receptor 1 family. In terms of tissue distribution, expressed in the tongue.

Its subcellular location is the cell membrane. Its function is as follows. Odorant receptor (Potential). May be involved in taste perception. This Homo sapiens (Human) protein is Olfactory receptor 8D1 (OR8D1).